A 158-amino-acid chain; its full sequence is UPF0225 protein Pput_1155 (158 aa).

This sequence belongs to the UPF0225 family.

In Pseudomonas putida (strain ATCC 700007 / DSM 6899 / JCM 31910 / BCRC 17059 / LMG 24140 / F1), this protein is UPF0225 protein Pput_1155.